We begin with the raw amino-acid sequence, 482 residues long: Glutamate--tRNA ligase 2 (482 aa).

The short motif at 16–26 is the 'HIGH' region element; that stretch reads PSPTGYLHLGN. Residues C113, C115, C140, and H142 each contribute to the Zn(2+) site. The short motif at 257–261 is the 'KMSKS' region element; that stretch reads PLSKR. Position 260 (K260) interacts with ATP.

This sequence belongs to the class-I aminoacyl-tRNA synthetase family. Glutamate--tRNA ligase type 1 subfamily. In terms of assembly, monomer. Zn(2+) serves as cofactor.

The protein localises to the cytoplasm. The catalysed reaction is tRNA(Glu) + L-glutamate + ATP = L-glutamyl-tRNA(Glu) + AMP + diphosphate. In terms of biological role, catalyzes the attachment of glutamate to tRNA(Glu) in a two-step reaction: glutamate is first activated by ATP to form Glu-AMP and then transferred to the acceptor end of tRNA(Glu). This is Glutamate--tRNA ligase 2 from Acidithiobacillus ferrooxidans (strain ATCC 53993 / BNL-5-31) (Leptospirillum ferrooxidans (ATCC 53993)).